A 49-amino-acid chain; its full sequence is U6-myrmicitoxin-Mri1a (49 aa).

The signal sequence occupies residues 1–27 (MNPKALCSFLLATFLLLTVTIMPSVHA). A propeptide spanning residues 28-35 (NAEANADA) is cleaved from the precursor.

Contains 1 disulfide bond. In terms of tissue distribution, expressed by the venom gland.

It localises to the secreted. The sequence is that of U6-myrmicitoxin-Mri1a from Manica rubida (European giant red ant).